Reading from the N-terminus, the 186-residue chain is Elongation factor P (186 aa).

This sequence belongs to the elongation factor P family.

Its subcellular location is the cytoplasm. It participates in protein biosynthesis; polypeptide chain elongation. Its function is as follows. Involved in peptide bond synthesis. Stimulates efficient translation and peptide-bond synthesis on native or reconstituted 70S ribosomes in vitro. Probably functions indirectly by altering the affinity of the ribosome for aminoacyl-tRNA, thus increasing their reactivity as acceptors for peptidyl transferase. The protein is Elongation factor P of Shewanella sp. (strain W3-18-1).